Reading from the N-terminus, the 131-residue chain is Neo-calmodulin (131 aa).

4 EF-hand domains span residues 1 to 32 (EFKE…LGQN), 33 to 68 (PTEA…KMKD), 70 to 105 (DSEE…LGEK), and 106 to 131 (LTDE…YEEF). Residues aspartate 10, aspartate 12, aspartate 14, threonine 16, glutamate 21, aspartate 46, aspartate 48, asparagine 50, threonine 52, glutamate 57, aspartate 83, aspartate 85, asparagine 87, tyrosine 89, glutamate 94, aspartate 119, aspartate 121, aspartate 123, glutamine 125, and glutamate 130 each coordinate Ca(2+).

It belongs to the calmodulin family.

In Gallus gallus (Chicken), this protein is Neo-calmodulin.